The chain runs to 52 residues: ATP synthase protein 8 (52 aa).

Residues 7-27 (MKWFLIYFIYLLIFYLFIMLI) traverse the membrane as a helical segment.

Belongs to the ATPase protein 8 family. F-type ATPases have 2 components, CF(1) - the catalytic core - and CF(0) - the membrane proton channel.

Its subcellular location is the mitochondrion membrane. Functionally, mitochondrial membrane ATP synthase (F(1)F(0) ATP synthase or Complex V) produces ATP from ADP in the presence of a proton gradient across the membrane which is generated by electron transport complexes of the respiratory chain. F-type ATPases consist of two structural domains, F(1) - containing the extramembraneous catalytic core and F(0) - containing the membrane proton channel, linked together by a central stalk and a peripheral stalk. During catalysis, ATP synthesis in the catalytic domain of F(1) is coupled via a rotary mechanism of the central stalk subunits to proton translocation. Part of the complex F(0) domain. Minor subunit located with subunit a in the membrane. This is ATP synthase protein 8 (mt:ATPase8) from Apis mellifera ligustica (Common honeybee).